The sequence spans 95 residues: Integration host factor subunit beta (95 aa).

Belongs to the bacterial histone-like protein family. Heterodimer of an alpha and a beta chain.

Functionally, this protein is one of the two subunits of integration host factor, a specific DNA-binding protein that functions in genetic recombination as well as in transcriptional and translational control. The chain is Integration host factor subunit beta from Klebsiella pneumoniae (strain 342).